The primary structure comprises 434 residues: Glutamine synthetase leaf isozyme, chloroplastic (434 aa).

2 disordered regions span residues 1–33 and 101–126; these read MQVRRDDDGAGGCAGDAVPGGGEGQDGVPARQP and TISKPVEDPSELPKWNYDGSSTGQAP. The transit peptide at 1 to 54 directs the protein to the chloroplast; that stretch reads MQVRRDDDGAGGCAGDAVPGGGEGQDGVPARQPAGRVWGVSRAARATSGFKVLA. Over residues 10 to 25 the composition is skewed to gly residues; sequence AGGCAGDAVPGGGEGQ. The region spanning 81-161 is the GS beta-grasp domain; the sequence is IIAEYIWVGG…VICDTYTPQG (81 aa). The 267-residue stretch at 168-434 folds into the GS catalytic domain; sequence KRHMAAQIFS…LAAKKLALKV (267 aa).

This sequence belongs to the glutamine synthetase family. Homooctamer.

It localises to the plastid. Its subcellular location is the chloroplast. The enzyme catalyses L-glutamate + NH4(+) + ATP = L-glutamine + ADP + phosphate + H(+). Its function is as follows. The light-modulated chloroplast enzyme, encoded by a nuclear gene and expressed primarily in leaves, is responsible for the reassimilation of the ammonia generated by photorespiration. The chain is Glutamine synthetase leaf isozyme, chloroplastic from Hordeum vulgare (Barley).